A 103-amino-acid polypeptide reads, in one-letter code: Transcription factor S (103 aa).

The Zn(2+) site is built by Cys4, Cys7, Cys20, Cys23, Cys64, Cys67, Cys92, and Cys95. A C4-type zinc finger spans residues 4 to 23 (CPKCKSLMIYQGDKLVCRKC). The segment at 60–100 (TKAICPACGHNEAFWWLRQLRAADESEVRFFRCTKCGKTWR) adopts a TFIIS-type zinc-finger fold.

Belongs to the archaeal RpoM/eukaryotic RPA12/RPB9/RPC11 RNA polymerase family.

In terms of biological role, induces RNA cleavage activity in the RNA polymerase. In its presence, the cleavage activity of the RNA polymerase truncates the RNA back to position +15 in a stepwise manner by releasing mainly dinucleotides from the 3'-end of the nascent RNA. The truncated RNAs are able to continue elongation. Involved in transcriptional proofreading and fidelity. Misincorporation of nucleotides during elongation of transcription leads to arrested elongation complexes which are rescued by TFS-promoted removal of a dinucleotide from the 3'-end. TFS is able to induce a cleavage resynthesis cycle in stalled elongation complexes (resulting from the next missing nucleotide or a reduced incorporation rate of a wrong nucleotide) preventing misincorporation and enabling proofreading in a post-incorporation manner. Pausing of elongation complexes is the main determinant of TFS-induced RNA cleavage. The polypeptide is Transcription factor S (Archaeoglobus fulgidus (strain ATCC 49558 / DSM 4304 / JCM 9628 / NBRC 100126 / VC-16)).